A 513-amino-acid chain; its full sequence is Na(+)/H(+) antiporter NhaB (513 aa).

11 helical membrane-spanning segments follow: residues Leu23–Ala43, Ile52–Ile72, Leu97–Phe117, Phe144–Ile164, Leu202–Pro222, Phe238–Leu258, Ala303–Ile323, Thr348–Ile368, Leu391–Ile411, Ala447–Ile467, and Val475–Phe495.

Belongs to the NhaB Na(+)/H(+) (TC 2.A.34) antiporter family.

It localises to the cell inner membrane. It carries out the reaction 2 Na(+)(in) + 3 H(+)(out) = 2 Na(+)(out) + 3 H(+)(in). Na(+)/H(+) antiporter that extrudes sodium in exchange for external protons. The chain is Na(+)/H(+) antiporter NhaB from Escherichia coli (strain SMS-3-5 / SECEC).